The following is a 210-amino-acid chain: Urease accessory protein UreF (210 aa).

It belongs to the UreF family. As to quaternary structure, ureD, UreF and UreG form a complex that acts as a GTP-hydrolysis-dependent molecular chaperone, activating the urease apoprotein by helping to assemble the nickel containing metallocenter of UreC. The UreE protein probably delivers the nickel.

It localises to the cytoplasm. Its function is as follows. Required for maturation of urease via the functional incorporation of the urease nickel metallocenter. In Dinoroseobacter shibae (strain DSM 16493 / NCIMB 14021 / DFL 12), this protein is Urease accessory protein UreF.